The following is a 263-amino-acid chain: MTPIKVVVHGASGKMGQEVLKTLCQENNLHPVGAVDIRAENPAMALPDGSGSIPYSADLSSILSQTKPDVMVDFTVAKASMPAVRIAAAHKVNLVIGTTGFSPEEISEIEQLAKTNDIGIILAPNFALGAIIMVHLAQVASRFLSSAEVIELHHDKKLDSPSGTALVTVASMLEARGEAFNKPPKENLTDARGQEHDGIRVHSVRLPGLLAHQEVIFGAAGQTLTIRHDAFSRECYMPGVLLAIKEIVHTKGFVFGLDKLLKL.

Residue 10-15 (GASGKM) coordinates NAD(+). Arg38 is an NADP(+) binding site. NAD(+)-binding positions include 97 to 99 (GTT) and 123 to 126 (APNF). His153 acts as the Proton donor/acceptor in catalysis. His154 lines the (S)-2,3,4,5-tetrahydrodipicolinate pocket. Lys157 functions as the Proton donor in the catalytic mechanism. A (S)-2,3,4,5-tetrahydrodipicolinate-binding site is contributed by 163–164 (GT).

This sequence belongs to the DapB family.

The protein localises to the cytoplasm. The catalysed reaction is (S)-2,3,4,5-tetrahydrodipicolinate + NAD(+) + H2O = (2S,4S)-4-hydroxy-2,3,4,5-tetrahydrodipicolinate + NADH + H(+). It carries out the reaction (S)-2,3,4,5-tetrahydrodipicolinate + NADP(+) + H2O = (2S,4S)-4-hydroxy-2,3,4,5-tetrahydrodipicolinate + NADPH + H(+). It participates in amino-acid biosynthesis; L-lysine biosynthesis via DAP pathway; (S)-tetrahydrodipicolinate from L-aspartate: step 4/4. Its function is as follows. Catalyzes the conversion of 4-hydroxy-tetrahydrodipicolinate (HTPA) to tetrahydrodipicolinate. The chain is 4-hydroxy-tetrahydrodipicolinate reductase from Dehalococcoides mccartyi (strain ATCC BAA-2100 / JCM 16839 / KCTC 5957 / BAV1).